A 167-amino-acid chain; its full sequence is Lipoprotein signal peptidase (167 aa).

2 helical membrane passes run 67-87 (WILV…LWRA) and 91-111 (LVAL…IDRI). Active-site residues include aspartate 118 and aspartate 136. The chain crosses the membrane as a helical span at residues 127–147 (FSWYVFNLADAAIVAGVALLI).

The protein belongs to the peptidase A8 family.

The protein localises to the cell inner membrane. It carries out the reaction Release of signal peptides from bacterial membrane prolipoproteins. Hydrolyzes -Xaa-Yaa-Zaa-|-(S,diacylglyceryl)Cys-, in which Xaa is hydrophobic (preferably Leu), and Yaa (Ala or Ser) and Zaa (Gly or Ala) have small, neutral side chains.. It participates in protein modification; lipoprotein biosynthesis (signal peptide cleavage). This protein specifically catalyzes the removal of signal peptides from prolipoproteins. This is Lipoprotein signal peptidase from Beijerinckia indica subsp. indica (strain ATCC 9039 / DSM 1715 / NCIMB 8712).